The following is a 682-amino-acid chain: Potassium-transporting ATPase ATP-binding subunit (682 aa).

4 helical membrane passes run 34–54 (PVMFIVWIGSLLTTCISIAMA), 62–82 (ALFSAAISGWLWVTVLFANFA), 219–239 (IALTILLIALTIVFLLATATL), and 254–274 (VLVALLVCLIPTTIGGLLSAI). The active-site 4-aspartylphosphate intermediate is Asp-307. ATP is bound by residues Asp-344, Glu-348, 377–384 (FTAQSRMS), and Lys-395. Residues Asp-518 and Asp-522 each coordinate Mg(2+). Transmembrane regions (helical) follow at residues 588 to 608 (FAIIPAAFAATYPQLNALNIM), 616 to 636 (AILSAVIFNALIIVFLIPLAL), and 656 to 676 (IYGLGGLLVPFIGIKVIDLLL).

Belongs to the cation transport ATPase (P-type) (TC 3.A.3) family. Type IA subfamily. The system is composed of three essential subunits: KdpA, KdpB and KdpC.

It localises to the cell inner membrane. The catalysed reaction is K(+)(out) + ATP + H2O = K(+)(in) + ADP + phosphate + H(+). Functionally, part of the high-affinity ATP-driven potassium transport (or Kdp) system, which catalyzes the hydrolysis of ATP coupled with the electrogenic transport of potassium into the cytoplasm. This subunit is responsible for energy coupling to the transport system and for the release of the potassium ions to the cytoplasm. The protein is Potassium-transporting ATPase ATP-binding subunit of Escherichia coli O139:H28 (strain E24377A / ETEC).